Here is an 88-residue protein sequence, read N- to C-terminus: Small ribosomal subunit protein bS20 (88 aa).

This sequence belongs to the bacterial ribosomal protein bS20 family.

Its function is as follows. Binds directly to 16S ribosomal RNA. In Mycoplasmopsis synoviae (strain 53) (Mycoplasma synoviae), this protein is Small ribosomal subunit protein bS20.